The following is a 256-amino-acid chain: Ribosomal RNA small subunit methyltransferase J (256 aa).

S-adenosyl-L-methionine contacts are provided by residues 104-105 (RD), 120-121 (ER), 156-157 (SS), and D174.

Belongs to the methyltransferase superfamily. RsmJ family.

The protein localises to the cytoplasm. It catalyses the reaction guanosine(1516) in 16S rRNA + S-adenosyl-L-methionine = N(2)-methylguanosine(1516) in 16S rRNA + S-adenosyl-L-homocysteine + H(+). Its function is as follows. Specifically methylates the guanosine in position 1516 of 16S rRNA. This Yersinia pseudotuberculosis serotype O:3 (strain YPIII) protein is Ribosomal RNA small subunit methyltransferase J.